Reading from the N-terminus, the 178-residue chain is Fatty-acid and retinol-binding protein 1 (178 aa).

The N-terminal stretch at 1–16 (MYHQLILLALIGTIMA) is a signal peptide. Coiled coils occupy residues 67–89 (DAALEALKDKSDKLYKNAVELRN) and 129–154 (IKQAARDIIAKYQALNEETKEELKVT).

Belongs to the fatty-acid and retinol-binding protein (FARBP) family. Not glycosylated.

The protein resides in the secreted. Functionally, binds retinol and different fatty acids. This is Fatty-acid and retinol-binding protein 1 from Loa loa (Eye worm).